The following is a 340-amino-acid chain: SH2 domain-containing adapter protein D (340 aa).

3 disordered regions span residues Met-1–Arg-77, Gly-94–Glu-186, and Val-198–Asp-230. A compositionally biased stretch (acidic residues) spans Glu-98 to Asp-108. The segment covering Pro-171–Glu-186 has biased composition (basic and acidic residues). Positions Trp-240 to Val-335 constitute an SH2 domain.

In terms of processing, tyrosine phosphorylated by ABL.

Functionally, may function as an adapter protein. This is SH2 domain-containing adapter protein D (SHD) from Homo sapiens (Human).